We begin with the raw amino-acid sequence, 225 residues long: UPF0173 metal-dependent hydrolase Tneu_1348 (225 aa).

Belongs to the UPF0173 family.

The polypeptide is UPF0173 metal-dependent hydrolase Tneu_1348 (Pyrobaculum neutrophilum (strain DSM 2338 / JCM 9278 / NBRC 100436 / V24Sta) (Thermoproteus neutrophilus)).